A 133-amino-acid chain; its full sequence is Vesicle transport protein GOT1A (133 aa).

Residues 1-9 (MISITEWQK) are Cytoplasmic-facing. The chain crosses the membrane as a helical span at residues 10 to 30 (IGVGITGFGVFFILFGILLYF). A topological domain (lumenal) is located at residue Asp-31. Residues 32-52 (SVLLAFGNLLFLTGLSLIIGL) traverse the membrane as a helical segment. The Cytoplasmic portion of the chain corresponds to 53–68 (RRTFAFFFQRHKLKGT). The chain crosses the membrane as a helical span at residues 69–89 (SFFLGGVAIVLLRWPLLGMLL). Residues 90–92 (EAY) are Lumenal-facing. A helical membrane pass occupies residues 93-113 (GFISLFKGFFPVVFGFLGSAF). At 114–133 (NIPFLSTLFQKLQGSSSSMV) the chain is on the cytoplasmic side.

Belongs to the GOT1 family.

The protein localises to the golgi apparatus membrane. Its function is as follows. May be involved in fusion of ER-derived transport vesicles with the Golgi complex. The chain is Vesicle transport protein GOT1A from Mus musculus (Mouse).